A 47-amino-acid polypeptide reads, in one-letter code: DSRGTQLHRALRKATILSVSARCKLSGYRCKRPKQCCNLSCGNYMCG.

Residues 1–22 constitute a propeptide that is removed on maturation; it reads DSRGTQLHRALRKATILSVSAR. Disulfide bonds link Cys23/Cys37, Cys30/Cys41, and Cys36/Cys46. The residue at position 46 (Cys46) is a Cysteine amide.

It belongs to the conotoxin O1 superfamily. As to expression, expressed by the venom duct.

The protein resides in the secreted. In Conus bullatus (Bubble cone), this protein is Conotoxin Bu10.